The sequence spans 500 residues: uncharacterized protein (500 aa).

Residues Met-1–Ile-13 are compositionally biased toward low complexity. The interval Met-1–Arg-23 is disordered. Ser-9 carries the post-translational modification Phosphoserine. The next 12 helical transmembrane spans lie at Val-87 to Leu-107, Leu-126 to Ala-146, Leu-156 to Cys-176, Trp-183 to Tyr-203, Met-225 to Ala-245, Val-261 to Phe-281, Phe-312 to Gln-332, Gly-351 to Leu-371, Ile-380 to Ala-400, Val-408 to Ile-428, Ile-445 to Ile-465, and Val-471 to Met-491.

It belongs to the major facilitator superfamily.

Its subcellular location is the golgi apparatus. The protein resides in the membrane. This is an uncharacterized protein from Schizosaccharomyces pombe (strain 972 / ATCC 24843) (Fission yeast).